The primary structure comprises 457 residues: Siroheme synthase (457 aa).

The tract at residues 1 to 204 (MDHLPIFCQL…NDQKAITETT (204 aa)) is precorrin-2 dehydrogenase /sirohydrochlorin ferrochelatase. NAD(+)-binding positions include 22–23 (DV) and 43–44 (LA). Ser-128 bears the Phosphoserine mark. A uroporphyrinogen-III C-methyltransferase region spans residues 216–457 (GEVVLVGAGP…RDKLNWFSNH (242 aa)). Pro-225 lines the S-adenosyl-L-methionine pocket. Catalysis depends on Asp-248, which acts as the Proton acceptor. Lys-270 acts as the Proton donor in catalysis. S-adenosyl-L-methionine contacts are provided by residues 301–303 (GGD), Ile-306, 331–332 (TA), Met-382, and Gly-411.

In the N-terminal section; belongs to the precorrin-2 dehydrogenase / sirohydrochlorin ferrochelatase family. The protein in the C-terminal section; belongs to the precorrin methyltransferase family.

The enzyme catalyses uroporphyrinogen III + 2 S-adenosyl-L-methionine = precorrin-2 + 2 S-adenosyl-L-homocysteine + H(+). The catalysed reaction is precorrin-2 + NAD(+) = sirohydrochlorin + NADH + 2 H(+). It carries out the reaction siroheme + 2 H(+) = sirohydrochlorin + Fe(2+). The protein operates within cofactor biosynthesis; adenosylcobalamin biosynthesis; precorrin-2 from uroporphyrinogen III: step 1/1. It participates in cofactor biosynthesis; adenosylcobalamin biosynthesis; sirohydrochlorin from precorrin-2: step 1/1. Its pathway is porphyrin-containing compound metabolism; siroheme biosynthesis; precorrin-2 from uroporphyrinogen III: step 1/1. It functions in the pathway porphyrin-containing compound metabolism; siroheme biosynthesis; siroheme from sirohydrochlorin: step 1/1. The protein operates within porphyrin-containing compound metabolism; siroheme biosynthesis; sirohydrochlorin from precorrin-2: step 1/1. In terms of biological role, multifunctional enzyme that catalyzes the SAM-dependent methylations of uroporphyrinogen III at position C-2 and C-7 to form precorrin-2 via precorrin-1. Then it catalyzes the NAD-dependent ring dehydrogenation of precorrin-2 to yield sirohydrochlorin. Finally, it catalyzes the ferrochelation of sirohydrochlorin to yield siroheme. This is Siroheme synthase from Escherichia coli (strain 55989 / EAEC).